The sequence spans 83 residues: Exodeoxyribonuclease 7 small subunit (83 aa).

It belongs to the XseB family. As to quaternary structure, heterooligomer composed of large and small subunits.

The protein resides in the cytoplasm. The enzyme catalyses Exonucleolytic cleavage in either 5'- to 3'- or 3'- to 5'-direction to yield nucleoside 5'-phosphates.. In terms of biological role, bidirectionally degrades single-stranded DNA into large acid-insoluble oligonucleotides, which are then degraded further into small acid-soluble oligonucleotides. The protein is Exodeoxyribonuclease 7 small subunit of Rhizobium rhizogenes (strain K84 / ATCC BAA-868) (Agrobacterium radiobacter).